Here is a 182-residue protein sequence, read N- to C-terminus: Large ribosomal subunit protein uL5 (182 aa).

Belongs to the universal ribosomal protein uL5 family. Part of the 50S ribosomal subunit; part of the 5S rRNA/L5/L18/L25 subcomplex. Contacts the 5S rRNA and the P site tRNA. Forms a bridge to the 30S subunit in the 70S ribosome.

In terms of biological role, this is one of the proteins that bind and probably mediate the attachment of the 5S RNA into the large ribosomal subunit, where it forms part of the central protuberance. In the 70S ribosome it contacts protein S13 of the 30S subunit (bridge B1b), connecting the 2 subunits; this bridge is implicated in subunit movement. Contacts the P site tRNA; the 5S rRNA and some of its associated proteins might help stabilize positioning of ribosome-bound tRNAs. The protein is Large ribosomal subunit protein uL5 of Borrelia turicatae (strain 91E135).